Reading from the N-terminus, the 776-residue chain is Endonuclease MutS2 (776 aa).

An ATP-binding site is contributed by 328–335; it reads GPNTGGKT. The 76-residue stretch at 701-776 folds into the Smr domain; sequence LDLRGKRYEE…GSGATIVTFK (76 aa).

Belongs to the DNA mismatch repair MutS family. MutS2 subfamily. As to quaternary structure, homodimer. Binds to stalled ribosomes, contacting rRNA.

In terms of biological role, endonuclease that is involved in the suppression of homologous recombination and thus may have a key role in the control of bacterial genetic diversity. Its function is as follows. Acts as a ribosome collision sensor, splitting the ribosome into its 2 subunits. Detects stalled/collided 70S ribosomes which it binds and splits by an ATP-hydrolysis driven conformational change. Acts upstream of the ribosome quality control system (RQC), a ribosome-associated complex that mediates the extraction of incompletely synthesized nascent chains from stalled ribosomes and their subsequent degradation. Probably generates substrates for RQC. The chain is Endonuclease MutS2 from Streptococcus mutans serotype c (strain ATCC 700610 / UA159).